A 100-amino-acid polypeptide reads, in one-letter code: UPF0213 protein YhbQ (100 aa).

The GIY-YIG domain occupies 2 to 77 (TPWFLYLIRT…KQLTKRQKER (76 aa)).

This sequence belongs to the UPF0213 family.

The polypeptide is UPF0213 protein YhbQ (Escherichia coli O81 (strain ED1a)).